Reading from the N-terminus, the 304-residue chain is Homoserine O-succinyltransferase (304 aa).

The active-site Acyl-thioester intermediate is the Cys-142. Lys-163 and Ser-192 together coordinate substrate. The active-site Proton acceptor is His-235. Residue Glu-237 is part of the active site. Residue Arg-249 coordinates substrate.

This sequence belongs to the MetA family.

Its subcellular location is the cytoplasm. The enzyme catalyses L-homoserine + succinyl-CoA = O-succinyl-L-homoserine + CoA. The protein operates within amino-acid biosynthesis; L-methionine biosynthesis via de novo pathway; O-succinyl-L-homoserine from L-homoserine: step 1/1. Transfers a succinyl group from succinyl-CoA to L-homoserine, forming succinyl-L-homoserine. In Blochmanniella pennsylvanica (strain BPEN), this protein is Homoserine O-succinyltransferase.